We begin with the raw amino-acid sequence, 692 residues long: Translation initiation factor IF-2 (692 aa).

Positions 194–363 constitute a tr-type G domain; it reads PRPPIVTVMG…LLVAEMEDLK (170 aa). The G1 stretch occupies residues 203 to 210; that stretch reads GHVDHGKT. 203 to 210 is a GTP binding site; that stretch reads GHVDHGKT. The G2 stretch occupies residues 228–232; that stretch reads GITQH. The interval 249 to 252 is G3; it reads DTPG. Residues 249–253 and 303–306 contribute to the GTP site; these read DTPGH and NKID. The tract at residues 303-306 is G4; sequence NKID. Residues 339–341 are G5; the sequence is SAK.

It belongs to the TRAFAC class translation factor GTPase superfamily. Classic translation factor GTPase family. IF-2 subfamily.

It is found in the cytoplasm. One of the essential components for the initiation of protein synthesis. Protects formylmethionyl-tRNA from spontaneous hydrolysis and promotes its binding to the 30S ribosomal subunits. Also involved in the hydrolysis of GTP during the formation of the 70S ribosomal complex. The polypeptide is Translation initiation factor IF-2 (Thermoanaerobacter sp. (strain X514)).